The chain runs to 545 residues: 2-succinyl-5-enolpyruvyl-6-hydroxy-3-cyclohexene-1-carboxylate synthase (545 aa).

The interval 184–209 is disordered; that stretch reads PLVPDPEPHGAPTPAGRPGGRPWTYT. The segment covering 195–205 has biased composition (low complexity); sequence PTPAGRPGGRP.

It belongs to the TPP enzyme family. MenD subfamily. Homodimer. Mg(2+) serves as cofactor. Mn(2+) is required as a cofactor. The cofactor is thiamine diphosphate.

It carries out the reaction isochorismate + 2-oxoglutarate + H(+) = 5-enolpyruvoyl-6-hydroxy-2-succinyl-cyclohex-3-ene-1-carboxylate + CO2. It participates in quinol/quinone metabolism; 1,4-dihydroxy-2-naphthoate biosynthesis; 1,4-dihydroxy-2-naphthoate from chorismate: step 2/7. The protein operates within quinol/quinone metabolism; menaquinone biosynthesis. Catalyzes the thiamine diphosphate-dependent decarboxylation of 2-oxoglutarate and the subsequent addition of the resulting succinic semialdehyde-thiamine pyrophosphate anion to isochorismate to yield 2-succinyl-5-enolpyruvyl-6-hydroxy-3-cyclohexene-1-carboxylate (SEPHCHC). In Mycobacterium avium (strain 104), this protein is 2-succinyl-5-enolpyruvyl-6-hydroxy-3-cyclohexene-1-carboxylate synthase.